A 453-amino-acid chain; its full sequence is Autophagy-related protein 21 (453 aa).

A WD 1 repeat occupies 4–137 (LRFNQDASCC…NDQIFIYDIS (134 aa)). Residues 177-207 (GNELDRIRSKSNNNNDQTNSDNGRSRTYSIN) form a disordered region. Over residues 187 to 198 (SNNNNDQTNSDN) the composition is skewed to low complexity. WD repeat units lie at residues 252 to 347 (NLKP…RTDD) and 419 to 453 (FDNK…SHFI). The L/FRRG motif motif lies at 310–314 (FRRGS).

Belongs to the WD repeat PROPPIN family.

It localises to the cytoplasm. The protein localises to the membrane. The protein resides in the vacuole membrane. Required for cytoplasm to vacuole transport (Cvt) vesicles formation and mitophagy. Involved in binding of phosphatidylethanolamine to ATG8 and in recruitment of ATG8 and ATG5 to the pre-autophagosomal structure. Protects ATG8 from ARG4-mediated cleavage. The polypeptide is Autophagy-related protein 21 (ATG21) (Candida glabrata (strain ATCC 2001 / BCRC 20586 / JCM 3761 / NBRC 0622 / NRRL Y-65 / CBS 138) (Yeast)).